The following is a 635-amino-acid chain: Glutamine sensor PIB2 (635 aa).

Residues 1-110 (MTALHSVSKT…GTGFVDRKQQ (110 aa)) are disordered. The interval 1–164 (MTALHSVSKT…KTLPFTDDQR (164 aa)) is may play a role in attenuating TORC1 signaling. Basic and acidic residues predominate over residues 33-44 (RNHDYRGRKGDE). Phosphoserine occurs at positions 46 and 53. Position 56 is a phosphothreonine (Thr56). The span at 67 to 85 (STHSEQSILSSISLKSMVN) shows a compositional bias: polar residues. Phosphoserine occurs at positions 73, 113, 124, 148, 165, and 174. Disordered regions lie at residues 123–181 (NSAE…VSRG) and 224–254 (SSNL…TSKV). Over residues 238–254 (SSSSSTSSVSSSSTSKV) the composition is skewed to low complexity. 3 positions are modified to phosphoserine: Ser300, Ser309, and Ser381. The tract at residues 304-440 (LPQPASSTNL…PTISNRNSAR (137 aa)) is required for interaction with TORC1. An FYVE-type; atypical zinc finger spans residues 452-527 (DSKRNSCRYC…ICDDCLVEYE (76 aa)). Zn(2+) contacts are provided by Cys458, Cys461, Cys474, Cys477, Cys482, His485, Cys519, and Cys522. Disordered stretches follow at residues 534-557 (HNAN…DNRK) and 570-623 (ALFR…GSVI). 2 stretches are compositionally biased toward acidic residues: residues 543-553 (INVEEGEDDDN) and 601-616 (EEAD…EEGN). The tract at residues 620–635 (GSVIGSVPANWNWSSF) is may be required for TORC1 activation.

Interacts with the TORC1 complex when activated by glutamine or cysteine. Interacts with TOR1; glutamine enhances the interaction. Interacts with KOG1; glutamine enhances the interaction. Interacts with TCO89. Interacts with LST8; glutamine enhances the interaction. Interacts with TOR2; glutamine enhances the interaction.

It localises to the vacuole membrane. Its activity is regulated as follows. Activated by glutamine. May also be activated by cysteine. Functionally, functions as an intracellular glutamine sensor that directly activates the TORC1 signaling pathway, to promote cell growth when glutamine is available. May play a role in repressing NPR1 activity independently of TORC1 signaling. The sequence is that of Glutamine sensor PIB2 from Saccharomyces cerevisiae (strain ATCC 204508 / S288c) (Baker's yeast).